The following is a 308-amino-acid chain: uncharacterized protein (308 aa).

Positions 43-55 (SQYGTWADQHQNG) are enriched in polar residues. Positions 43-289 (SQYGTWADQH…KEERSEECSP (247 aa)) are disordered. Ser62 is subject to Phosphoserine. The span at 80-90 (HLSSYTESTSV) shows a compositional bias: polar residues. Residues 91 to 109 (EQRDSSRDRRSSSVDRSSS) are compositionally biased toward basic and acidic residues. Residues 136-152 (IHQTSVLDSSALKTRVQ) show a composition bias toward polar residues. The segment covering 153 to 168 (LSKRSRRRAPISHSLR) has biased composition (basic residues). A Phosphoserine modification is found at Ser166. 2 stretches are compositionally biased toward basic and acidic residues: residues 175–186 (SESRSPLEEESH) and 193–216 (DSTE…ERTP). Residues Ser205, Ser259, Ser262, and Ser288 each carry the phosphoserine modification.

This is an uncharacterized protein from Mus musculus (Mouse).